A 302-amino-acid chain; its full sequence is uncharacterized protein (302 aa).

Transmembrane regions (helical) follow at residues 25–45, 58–78, 104–124, 158–178, 182–202, 215–235, and 247–267; these read SFIF…LQIF, FSYL…VIAL, IQVG…WMFL, YGLL…ATVL, FAWA…QYVP, ALSI…GYLL, and MMYI…MFYL. The region spanning 175–245 is the PQ-loop domain; the sequence is ATVLSSNFAW…SRLPGTNWTT (71 aa).

It localises to the membrane. This is an uncharacterized protein from Schizosaccharomyces pombe (strain 972 / ATCC 24843) (Fission yeast).